We begin with the raw amino-acid sequence, 417 residues long: Ig-like V-type domain-containing protein FAM187A (417 aa).

An N-terminal signal peptide occupies residues 1 to 18 (MSLAHTTVLLWAWGSLQA). Topologically, residues 19–377 (FEIVEKESVF…ASLSDPETRT (359 aa)) are extracellular. N-linked (GlcNAc...) asparagine glycosylation is found at Asn-248 and Asn-318. Residues 268 to 362 (PWVPQVPIQF…IAGFRLGVIT (95 aa)) enclose the Ig-like V-type domain. Residues Cys-290 and Cys-346 are joined by a disulfide bond. The chain crosses the membrane as a helical span at residues 378–398 (AIELTLMGYLLITIFFITIHL). Residues 399 to 417 (CRCCCQSRCCPNFSAQTLL) lie on the Cytoplasmic side of the membrane.

It belongs to the FAM187 family.

The protein localises to the membrane. The protein is Ig-like V-type domain-containing protein FAM187A (Fam187a) of Mus musculus (Mouse).